A 211-amino-acid chain; its full sequence is Protein-methionine-sulfoxide reductase heme-binding subunit MsrQ (211 aa).

4 helical membrane passes run 10–30 (WLKV…VWAI), 82–102 (LWCF…ELGV), 116–136 (PYLT…FTST), and 153–173 (FVYL…KIIS).

Belongs to the MsrQ family. Heterodimer of a catalytic subunit (MsrP) and a heme-binding subunit (MsrQ). FMN serves as cofactor. It depends on heme b as a cofactor.

The protein resides in the cell inner membrane. Part of the MsrPQ system that repairs oxidized periplasmic proteins containing methionine sulfoxide residues (Met-O), using respiratory chain electrons. Thus protects these proteins from oxidative-stress damage caused by reactive species of oxygen and chlorine generated by the host defense mechanisms. MsrPQ is essential for the maintenance of envelope integrity under bleach stress, rescuing a wide series of structurally unrelated periplasmic proteins from methionine oxidation, including the primary periplasmic chaperone SurA and the lipoprotein Pal. MsrQ provides electrons for reduction to the reductase catalytic subunit MsrP, using the quinone pool of the respiratory chain. The protein is Protein-methionine-sulfoxide reductase heme-binding subunit MsrQ of Escherichia coli O157:H7.